The following is a 778-amino-acid chain: Ribonucleoside-diphosphate reductase large subunit (778 aa).

Substrate is bound by residues serine 177, 192–193 (SC), glycine 221, 419–423 (NLCIE), and 613–617 (PTATS). Residues cysteine 193 and cysteine 439 are joined by a disulfide bond. The active-site Proton acceptor is the asparagine 419. The active-site Cysteine radical intermediate is the cysteine 421. Catalysis depends on glutamate 423, which acts as the Proton acceptor.

The protein belongs to the ribonucleoside diphosphate reductase large chain family. As to quaternary structure, heterotetramer composed of a homodimer of the large subunit (R1) and a homodimer of the small subunit (R2). Larger multisubunit protein complex are also active, composed of (R1)n(R2)n.

The catalysed reaction is a 2'-deoxyribonucleoside 5'-diphosphate + [thioredoxin]-disulfide + H2O = a ribonucleoside 5'-diphosphate + [thioredoxin]-dithiol. Its activity is regulated as follows. Under complex allosteric control mediated by deoxynucleoside triphosphates and ATP binding. The type of nucleotide bound at the specificity site determines substrate preference. It seems probable that ATP makes the enzyme reduce CDP and UDP, dGTP favors ADP reduction and dTTP favors GDP reduction. In terms of biological role, ribonucleoside-diphosphate reductase holoenzyme provides the precursors necessary for viral DNA synthesis. Allows virus growth in non-dividing cells. Catalyzes the biosynthesis of deoxyribonucleotides from the corresponding ribonucleotides. The chain is Ribonucleoside-diphosphate reductase large subunit from Ornithodoros (relapsing fever ticks).